Here is a 352-residue protein sequence, read N- to C-terminus: Thiamine-phosphate synthase (352 aa).

The unknown stretch occupies residues 1–128 (MNPTPSETSL…AAEAAAIRYG (128 aa)). The disordered stretch occupies residues 63 to 85 (SYKQARSTSTDTGAGLKHPAQLD). The thiamine-phosphate synthase stretch occupies residues 129-352 (LYDLEVTCLN…LLQQLDQATI (224 aa)). 4-amino-2-methyl-5-(diphosphooxymethyl)pyrimidine-binding positions include 180–184 (QYRCK) and Asn-212. Mg(2+) is bound by residues Asp-213 and Asp-232. Positions 251 and 280 each coordinate 4-amino-2-methyl-5-(diphosphooxymethyl)pyrimidine. Gly-307 is a 2-[(2R,5Z)-2-carboxy-4-methylthiazol-5(2H)-ylidene]ethyl phosphate binding site.

It belongs to the thiamine-phosphate synthase family. Mg(2+) is required as a cofactor.

The enzyme catalyses 2-[(2R,5Z)-2-carboxy-4-methylthiazol-5(2H)-ylidene]ethyl phosphate + 4-amino-2-methyl-5-(diphosphooxymethyl)pyrimidine + 2 H(+) = thiamine phosphate + CO2 + diphosphate. The catalysed reaction is 2-(2-carboxy-4-methylthiazol-5-yl)ethyl phosphate + 4-amino-2-methyl-5-(diphosphooxymethyl)pyrimidine + 2 H(+) = thiamine phosphate + CO2 + diphosphate. It catalyses the reaction 4-methyl-5-(2-phosphooxyethyl)-thiazole + 4-amino-2-methyl-5-(diphosphooxymethyl)pyrimidine + H(+) = thiamine phosphate + diphosphate. It functions in the pathway cofactor biosynthesis; thiamine diphosphate biosynthesis; thiamine phosphate from 4-amino-2-methyl-5-diphosphomethylpyrimidine and 4-methyl-5-(2-phosphoethyl)-thiazole: step 1/1. In terms of biological role, condenses 4-methyl-5-(beta-hydroxyethyl)thiazole monophosphate (THZ-P) and 2-methyl-4-amino-5-hydroxymethyl pyrimidine pyrophosphate (HMP-PP) to form thiamine monophosphate (TMP). This Synechococcus sp. (strain CC9605) protein is Thiamine-phosphate synthase.